The primary structure comprises 188 residues: uncharacterized protein (188 aa).

A disordered region spans residues 121 to 142; that stretch reads ADTLSRKNKRSSDQKRNGQHFE. Residues 130 to 142 are compositionally biased toward basic and acidic residues; the sequence is RSSDQKRNGQHFE.

It belongs to the chlamydial CPn_0422/CT_273/TC_0545 family.

This is an uncharacterized protein from Chlamydia trachomatis serovar D (strain ATCC VR-885 / DSM 19411 / UW-3/Cx).